Here is a 283-residue protein sequence, read N- to C-terminus: Thymidylate synthase (283 aa).

A dUMP-binding site is contributed by Arg22. The Nucleophile role is filled by Cys160. DUMP is bound by residues 180-183 (RSCD), Asn191, and 221-223 (HIY). (6R)-5,10-methylene-5,6,7,8-tetrahydrofolate is bound at residue Asp183. A (6R)-5,10-methylene-5,6,7,8-tetrahydrofolate-binding site is contributed by Ser282.

This sequence belongs to the thymidylate synthase family. Bacterial-type ThyA subfamily. Homodimer.

It is found in the cytoplasm. The catalysed reaction is dUMP + (6R)-5,10-methylene-5,6,7,8-tetrahydrofolate = 7,8-dihydrofolate + dTMP. It functions in the pathway pyrimidine metabolism; dTTP biosynthesis. In terms of biological role, catalyzes the reductive methylation of 2'-deoxyuridine-5'-monophosphate (dUMP) to 2'-deoxythymidine-5'-monophosphate (dTMP) while utilizing 5,10-methylenetetrahydrofolate (mTHF) as the methyl donor and reductant in the reaction, yielding dihydrofolate (DHF) as a by-product. This enzymatic reaction provides an intracellular de novo source of dTMP, an essential precursor for DNA biosynthesis. This Histophilus somni (strain 129Pt) (Haemophilus somnus) protein is Thymidylate synthase.